The sequence spans 253 residues: MISSSANVPRSGFYYFSQGWKLVSQPGIRRFVILPLLVNILLMGGAFWWLFTQLDTWIPALMSYVPEWLQWLSYILWPLAVISVLLIFGYFFSTLANWIAAPFNGLLAEQLEARLTGATPPDTGIFGIMKDLPRIMKREWQKLAWYLPRAIVLLILYFIPGVGQTVAPVLWFLFSAWMLAIQYCDYPFDNHKVPFKEMRMALRTRKVTNMQFGALTSLFTMIPVLNLFIMPVAVCGATAMWVDCYRDKHALWK.

Helical transmembrane passes span 31–51, 72–92, 151–171, and 222–242; these read FVIL…WWLF, LSYI…GYFF, IVLL…PVLW, and IPVL…AMWV.

It belongs to the CysZ family.

The protein resides in the cell inner membrane. High affinity, high specificity proton-dependent sulfate transporter, which mediates sulfate uptake. Provides the sulfur source for the cysteine synthesis pathway. The chain is Sulfate transporter CysZ from Escherichia fergusonii (strain ATCC 35469 / DSM 13698 / CCUG 18766 / IAM 14443 / JCM 21226 / LMG 7866 / NBRC 102419 / NCTC 12128 / CDC 0568-73).